The primary structure comprises 283 residues: Large ribosomal subunit protein uL4 (283 aa).

It belongs to the universal ribosomal protein uL4 family. Part of the 50S ribosomal subunit.

One of the primary rRNA binding proteins, this protein initially binds near the 5'-end of the 23S rRNA. It is important during the early stages of 50S assembly. It makes multiple contacts with different domains of the 23S rRNA in the assembled 50S subunit and ribosome. Functionally, forms part of the polypeptide exit tunnel. The polypeptide is Large ribosomal subunit protein uL4 (Pyrobaculum aerophilum (strain ATCC 51768 / DSM 7523 / JCM 9630 / CIP 104966 / NBRC 100827 / IM2)).